Here is a 264-residue protein sequence, read N- to C-terminus: S-adenosylmethionine decarboxylase proenzyme (264 aa).

Residue S113 is the Schiff-base intermediate with substrate; via pyruvic acid of the active site. Position 113 is a pyruvic acid (Ser); by autocatalysis (S113). Catalysis depends on H118, which acts as the Proton acceptor; for processing activity. The active-site Proton donor; for catalytic activity is C141.

This sequence belongs to the prokaryotic AdoMetDC family. Type 2 subfamily. In terms of assembly, heterooctamer of four alpha and four beta chains arranged as a tetramer of alpha/beta heterodimers. Pyruvate is required as a cofactor. In terms of processing, is synthesized initially as an inactive proenzyme. Formation of the active enzyme involves a self-maturation process in which the active site pyruvoyl group is generated from an internal serine residue via an autocatalytic post-translational modification. Two non-identical subunits are generated from the proenzyme in this reaction, and the pyruvate is formed at the N-terminus of the alpha chain, which is derived from the carboxyl end of the proenzyme. The post-translation cleavage follows an unusual pathway, termed non-hydrolytic serinolysis, in which the side chain hydroxyl group of the serine supplies its oxygen atom to form the C-terminus of the beta chain, while the remainder of the serine residue undergoes an oxidative deamination to produce ammonia and the pyruvoyl group blocking the N-terminus of the alpha chain.

The catalysed reaction is S-adenosyl-L-methionine + H(+) = S-adenosyl 3-(methylsulfanyl)propylamine + CO2. It functions in the pathway amine and polyamine biosynthesis; S-adenosylmethioninamine biosynthesis; S-adenosylmethioninamine from S-adenosyl-L-methionine: step 1/1. In terms of biological role, catalyzes the decarboxylation of S-adenosylmethionine to S-adenosylmethioninamine (dcAdoMet), the propylamine donor required for the synthesis of the polyamines spermine and spermidine from the diamine putrescine. The polypeptide is S-adenosylmethionine decarboxylase proenzyme (Hahella chejuensis (strain KCTC 2396)).